A 494-amino-acid polypeptide reads, in one-letter code: Cobyric acid synthase (494 aa).

In terms of domain architecture, GATase cobBQ-type spans 254–453; sequence KQTVAVIAYP…LHGLFEDPGA (200 aa). C338 acts as the Nucleophile in catalysis. Residue H445 is part of the active site.

It belongs to the CobB/CobQ family. CobQ subfamily.

Its pathway is cofactor biosynthesis; adenosylcobalamin biosynthesis. Functionally, catalyzes amidations at positions B, D, E, and G on adenosylcobyrinic A,C-diamide. NH(2) groups are provided by glutamine, and one molecule of ATP is hydrogenolyzed for each amidation. The chain is Cobyric acid synthase from Albidiferax ferrireducens (strain ATCC BAA-621 / DSM 15236 / T118) (Rhodoferax ferrireducens).